The chain runs to 289 residues: Phosphatidylglycerol--prolipoprotein diacylglyceryl transferase (289 aa).

7 helical membrane-spanning segments follow: residues 17–37, 57–77, 89–109, 121–141, 174–194, 200–220, and 235–255; these read LAVR…ILLG, MLFY…IFFY, IFAV…VIAA, WLVV…AGRI, QLYE…IYSA, GAVS…AEFF, and ISMG…MLVW. Residue R140 coordinates a 1,2-diacyl-sn-glycero-3-phospho-(1'-sn-glycerol).

The protein belongs to the Lgt family.

It is found in the cell inner membrane. It catalyses the reaction L-cysteinyl-[prolipoprotein] + a 1,2-diacyl-sn-glycero-3-phospho-(1'-sn-glycerol) = an S-1,2-diacyl-sn-glyceryl-L-cysteinyl-[prolipoprotein] + sn-glycerol 1-phosphate + H(+). Its pathway is protein modification; lipoprotein biosynthesis (diacylglyceryl transfer). In terms of biological role, catalyzes the transfer of the diacylglyceryl group from phosphatidylglycerol to the sulfhydryl group of the N-terminal cysteine of a prolipoprotein, the first step in the formation of mature lipoproteins. This Nitrosospira multiformis (strain ATCC 25196 / NCIMB 11849 / C 71) protein is Phosphatidylglycerol--prolipoprotein diacylglyceryl transferase.